The chain runs to 174 residues: 5-hydroxymethyl-dUMP N-hydrolase (174 aa).

A2 carries the N-acetylalanine modification. G27 contributes to the 5-hydroxymethyl-dUMP binding site. Phosphoserine is present on S28. Residues I29, R30, G31, S98, G100, and E104 each coordinate 5-hydroxymethyl-dUMP. The residue at position 98 (S98) is a Phosphoserine. A phosphoserine mark is found at S123, S128, S138, and S169. Residue S128 coordinates 5-hydroxymethyl-dUMP.

It belongs to the 2'-deoxynucleoside 5'-phosphate N-hydrolase 1 family. In terms of assembly, monomer and homodimer. As to expression, expressed at low levels in brain, colon, lung, peripheral blood leukocytes, placenta, small intestine, and thymus. Expressed at high levels in heart, kidney, liver, skeletal muscle and spleen. Overexpressed in a significant proportion of breast cancers.

The protein resides in the cytoplasm. It localises to the nucleus. The catalysed reaction is 5-hydroxymethyl-dUMP + H2O = 5-hydroxymethyluracil + 2-deoxy-D-ribose 5-phosphate. Inhibited by AMP and GMP. Its function is as follows. Part of a nucleotide salvage pathway that eliminates epigenetically modified 5-hydroxymethyl-dCMP (hmdCMP) in a two-step process entailing deamination to cytotoxic 5-hydroxymethyl-dUMP (hmdUMP), followed by its hydrolysis into 5-hydroxymethyluracil (hmU) and 2-deoxy-D-ribose 5-phosphate (deoxyribosephosphate). Catalyzes the second step in that pathway, the hydrolysis of the N-glycosidic bond in hmdUMP, degrading this cytotoxic nucleotide to avoid its genomic integration. The protein is 5-hydroxymethyl-dUMP N-hydrolase of Homo sapiens (Human).